The sequence spans 1066 residues: FHIP family protein GH13096 (1066 aa).

Residues 1–15 (MSWLRTSPLRQSLTR) show a composition bias toward polar residues. The disordered stretch occupies residues 1 to 33 (MSWLRTSPLRQSLTRNSGGNGSGGSGNSGNASA). The segment covering 18 to 27 (GGNGSGGSGN) has biased composition (gly residues). Ser-512 is modified (phosphoserine). Disordered regions lie at residues 647–688 (SFKW…NSSG), 827–885 (DNSP…RSDN), and 942–1010 (SRGV…FNSE). The segment covering 658–687 (NDATTTTATSDPDVEHNNSSNHNNSSINSS) has biased composition (low complexity). Position 829 is a phosphoserine (Ser-829). A compositionally biased stretch (low complexity) spans 836-856 (HQQQQLQHTTNSTHQQQQAQQ). Residues 950-963 (PRGNTCETSLSTTP) show a composition bias toward polar residues. Residues 967–996 (AQATSASSTNSSIGGSTQTLSATHSSSTLH) show a composition bias toward low complexity. Over residues 1001–1010 (GPQTASFNSE) the composition is skewed to polar residues.

Belongs to the FHIP family.

This is FHIP family protein GH13096 from Drosophila grimshawi (Hawaiian fruit fly).